A 219-amino-acid chain; its full sequence is Glutathione S-transferase F13 (219 aa).

The GST N-terminal domain maps to 2-82 (AMKLYGDEMS…YIAEKHRDKG (81 aa)). Glutathione is bound by residues 11-12 (SA), 40-41 (HK), 53-54 (KV), and 66-67 (ES). Residues 90–217 (DPKEAAIVKL…VSPGLTVAPT (128 aa)) form the GST C-terminal domain.

This sequence belongs to the GST superfamily. Phi family.

It localises to the cytoplasm. It is found in the cytosol. It carries out the reaction RX + glutathione = an S-substituted glutathione + a halide anion + H(+). In terms of biological role, may be involved in the conjugation of reduced glutathione to a wide number of exogenous and endogenous hydrophobic electrophiles and have a detoxification role against certain herbicides. The protein is Glutathione S-transferase F13 (GSTF13) of Arabidopsis thaliana (Mouse-ear cress).